Reading from the N-terminus, the 251-residue chain is Xylose/arabinose import ATP-binding protein XylG (251 aa).

The ABC transporter domain maps to 5–241 (LEIRDVHKSF…EITEVMTSFA (237 aa)). An ATP-binding site is contributed by 37-44 (GDNGAGKS).

It belongs to the ABC transporter superfamily. As to quaternary structure, the complex is composed of two ATP-binding proteins (XylG), two transmembrane proteins (XylH) and a solute-binding protein (XylF).

The protein localises to the cell membrane. It catalyses the reaction D-xylose(out) + ATP + H2O = D-xylose(in) + ADP + phosphate + H(+). It carries out the reaction L-arabinose(out) + ATP + H2O = L-arabinose(in) + ADP + phosphate + H(+). Part of the ABC transporter complex XylFGH involved in the uptake of xylose and arabinose. Responsible for energy coupling to the transport system. The protein is Xylose/arabinose import ATP-binding protein XylG of Sulfolobus acidocaldarius (strain ATCC 33909 / DSM 639 / JCM 8929 / NBRC 15157 / NCIMB 11770).